Reading from the N-terminus, the 107-residue chain is Iron-binding protein IscA (107 aa).

Residues Cys35, Cys99, and Cys101 each coordinate Fe cation.

The protein belongs to the HesB/IscA family. In terms of assembly, homodimer; may form tetramers and higher multimers. Fe cation is required as a cofactor.

In terms of biological role, is able to transfer iron-sulfur clusters to apo-ferredoxin. Multiple cycles of [2Fe2S] cluster formation and transfer are observed, suggesting that IscA acts catalytically. Recruits intracellular free iron so as to provide iron for the assembly of transient iron-sulfur cluster in IscU in the presence of IscS, L-cysteine and the thioredoxin reductase system TrxA/TrxB. This Enterobacter sp. (strain 638) protein is Iron-binding protein IscA.